Here is a 1184-residue protein sequence, read N- to C-terminus: DNA-directed RNA polymerase subunit beta' (1184 aa).

Zn(2+) is bound by residues cysteine 60, cysteine 62, cysteine 75, and cysteine 78. Mg(2+) contacts are provided by aspartate 449, aspartate 451, and aspartate 453. 4 residues coordinate Zn(2+): cysteine 794, cysteine 867, cysteine 874, and cysteine 877. Residues asparagine 1165–asparagine 1184 are disordered.

Belongs to the RNA polymerase beta' chain family. In terms of assembly, the RNAP catalytic core consists of 2 alpha, 1 beta, 1 beta' and 1 omega subunit. When a sigma factor is associated with the core the holoenzyme is formed, which can initiate transcription. The cofactor is Mg(2+). Zn(2+) is required as a cofactor.

The enzyme catalyses RNA(n) + a ribonucleoside 5'-triphosphate = RNA(n+1) + diphosphate. Functionally, DNA-dependent RNA polymerase catalyzes the transcription of DNA into RNA using the four ribonucleoside triphosphates as substrates. The sequence is that of DNA-directed RNA polymerase subunit beta' from Thermoanaerobacter pseudethanolicus (strain ATCC 33223 / 39E) (Clostridium thermohydrosulfuricum).